The following is a 616-amino-acid chain: Protein LNK1 (616 aa).

Disordered regions lie at residues 72–112 (GKNP…HGFN), 361–398 (ESKS…GPTV), 410–434 (ANLL…KTDS), and 567–616 (SSLS…SDNN). Over residues 371–395 (KPSPSSASNESYTSNHAQSIESLQG) the composition is skewed to polar residues. Residues 567–577 (SSLSSDNNVLS) are compositionally biased toward low complexity. The segment covering 594 to 608 (RIEKQEETTELRPEA) has biased composition (basic and acidic residues).

As to quaternary structure, interacts with CCA1, LHY, REV4 and REV8, but not with PRR7 or PRR9. In terms of tissue distribution, expressed in roots, stems, leaves, seedlings, cotyledons, inflorescences and siliques. Highest expression in root tips, young leaves and vasculatur tissues.

It is found in the nucleus. Its function is as follows. Transcriptional coactivator necessary for expression of the clock genes PRR5 and TOC1. Antagonizes REV8 function in the regulation of anthocyanin accumulation. Involved in red light input to the clock. Activates clock-controlled genes with afternoon peak. Mediates light inhibition of hypocotyl elongation. The sequence is that of Protein LNK1 from Arabidopsis thaliana (Mouse-ear cress).